The primary structure comprises 93 residues: Corticostatin 1 (93 aa).

Positions 1–19 (MRTLILLAAILLAALQAQA) are cleaved as a signal peptide. Positions 20-59 (ELFSVNVDEVLDQQQPGSDQDLVIHLTGEESSALQVPDTK) are excised as a propeptide. Intrachain disulfides connect cysteine 62–cysteine 90, cysteine 64–cysteine 79, and cysteine 69–cysteine 89.

Belongs to the alpha-defensin family.

It localises to the secreted. Functionally, microbicidal activity and inhibits corticotropin (ACTH) stimulated corticosterone production. In Oryctolagus cuniculus (Rabbit), this protein is Corticostatin 1.